Reading from the N-terminus, the 728-residue chain is Beta-porphyranase A (728 aa).

An N-terminal signal peptide occupies residues 1–22; it reads MSYKYIFLLSAFTLGVPPGIYC. Residues His-53, Lys-76, Trp-78, Lys-87, His-114, and Asn-151 each coordinate substrate. The active-site Proton donor is the Glu-152. Substrate is bound by residues His-235, Glu-279, Ser-326, and Trp-331. Glu-279 functions as the Nucleophile in the catalytic mechanism. The CBM-cenC domain maps to 599–701; that stretch reads TLQNGTFSEG…AVSFDFNSTV (103 aa).

The protein belongs to the glycosyl hydrolase 86 family.

The enzyme catalyses Hydrolysis of beta-D-galactopyranose-(1-&gt;4)-alpha-L-galactopyranose-6-sulfate linkages in porphyran.. In terms of biological role, cleaves the sulfated polysaccharide porphyran at the (1-&gt;4) linkages between beta-D-galactopyranose and alpha-L-galactopyranose-6-sulfate, forming mostly the disaccharide alpha-L-galactopyranose-6-sulfate-(1-&gt;3)-beta-D-galactose. Some longer oligosaccharides of even number of residues are also observed. Inactive on the non-sulfated agarose portion of the porphyran backbone. Can also use methylated galactoses. This chain is Beta-porphyranase A, found in Phocaeicola plebeius (strain DSM 17135 / JCM 12973 / CCUG 54634 / M2) (Bacteroides plebeius).